The sequence spans 206 residues: Imidazoleglycerol-phosphate dehydratase (206 aa).

The disordered stretch occupies residues 1–24 (MDPTASGRQAPRNPRQATVQRETK).

This sequence belongs to the imidazoleglycerol-phosphate dehydratase family.

The protein resides in the cytoplasm. The catalysed reaction is D-erythro-1-(imidazol-4-yl)glycerol 3-phosphate = 3-(imidazol-4-yl)-2-oxopropyl phosphate + H2O. It participates in amino-acid biosynthesis; L-histidine biosynthesis; L-histidine from 5-phospho-alpha-D-ribose 1-diphosphate: step 6/9. This chain is Imidazoleglycerol-phosphate dehydratase, found in Acidothermus cellulolyticus (strain ATCC 43068 / DSM 8971 / 11B).